We begin with the raw amino-acid sequence, 111 residues long: Disintegrin DS-AS (111 aa).

Positions 1-20 (MIQVLLVIICLAVFPYQGSC) are cleaved as a signal peptide. A propeptide spanning residues 21–47 (IILESGNVNDYEIVYPKKLIVLPTGAM) is cleaved from the precursor. One can recognise a Disintegrin domain in the interval 47-111 (MNSPHPCCDP…PDCPRNPYKD (65 aa)). Intrachain disulfides connect Cys53–Cys76, Cys67–Cys73, Cys72–Cys97, and Cys85–Cys104. Positions 89-91 (RGD) match the Cell attachment site motif.

Heterodimer; disulfide-linked.

Its subcellular location is the secreted. Inhibits ADP-induced platelet aggregation in human platelet-rich plasma (IC(50) is 8 uM). This is Disintegrin DS-AS from Atheris squamigera (Variable bush viper).